Consider the following 633-residue polypeptide: Mini-chromosome maintenance complex-binding protein (633 aa).

The segment at proline 154 to lysine 198 is disordered. Basic and acidic residues predominate over residues glutamate 174–histidine 184.

The protein belongs to the MCMBP family. In terms of assembly, interacts with the MCM complex: associates with the MCM3-7 complex which lacks MCM2, while it does not interact with the MCM complex when MCM2 is present (MCM2-7 complex).

The protein localises to the nucleus. In terms of biological role, associated component of the MCM complex that acts as a regulator of DNA replication. Binds to the MCM complex during late S phase and promotes the disassembly of the MCM complex from chromatin, thereby acting as a key regulator of pre-replication complex (pre-RC) unloading from replicated DNA. Can dissociate the MCM complex without addition of ATP; probably acts by destabilizing interactions of each individual subunits of the MCM complex. Required for sister chromatid cohesion. The sequence is that of Mini-chromosome maintenance complex-binding protein (MCMBP) from Gallus gallus (Chicken).